We begin with the raw amino-acid sequence, 145 residues long: Bacilliredoxin ABC2045 (145 aa).

The protein belongs to the bacilliredoxin family.

In Shouchella clausii (strain KSM-K16) (Alkalihalobacillus clausii), this protein is Bacilliredoxin ABC2045.